The following is a 608-amino-acid chain: Glutamine--fructose-6-phosphate aminotransferase [isomerizing] (608 aa).

Cys2 (nucleophile; for GATase activity) is an active-site residue. The 217-residue stretch at 2-218 folds into the Glutamine amidotransferase type-2 domain; the sequence is CGICGIVGHQ…DGDWCELTPD (217 aa). SIS domains follow at residues 284 to 423 and 456 to 598; these read MPFD…ARGT and MAAV…VDQP. Catalysis depends on Lys603, which acts as the For Fru-6P isomerization activity.

Homodimer.

It localises to the cytoplasm. The catalysed reaction is D-fructose 6-phosphate + L-glutamine = D-glucosamine 6-phosphate + L-glutamate. In terms of biological role, catalyzes the first step in hexosamine metabolism, converting fructose-6P into glucosamine-6P using glutamine as a nitrogen source. In Gluconobacter oxydans (strain 621H) (Gluconobacter suboxydans), this protein is Glutamine--fructose-6-phosphate aminotransferase [isomerizing].